Reading from the N-terminus, the 484-residue chain is MKFIVKLQAEITIKSRPVRKRFTKILESSVKNVLRRIDEQVTTRMNWDNIEVNTKDNSPENRERLVEALKCIPGIPMFLEVQQSEFVDVHDIYEKTLAVHAESIENKTFCVRAKRTGNHDFNSLKVEQYVGGGLNQQVESAKVKLKNPDVTIHLEIKNKDLFIVTQRHKGLGGFPIATQEDVLSLMSGGFDSGVSSYQMIKKGARTHYCFFNLGGSAHEVGVKQISYYLWNKFGASHKVKFFAVDFEPVVAEILENVENSQMGVVLKRMMIRAATKIAERGKIQALVTGESLGQVSSQTLTNLNVINRVTDTLILRPLAAYDKQDIIDIARKIGTEEFSKTIPEYCGVISKKPTVKAVLSKVEEEEGNFDFDVLDKVVSETRVYDIRDIGKEAEEEIHAVDLVENIPENAVVVDIRSPEEEEDKPLELGDVEVKHIPFYKLSTQFGDLDMTKEYLLYCDHGVMSKLQALYLLDNGFKNVKVYRP.

In terms of domain architecture, THUMP spans 63-167; it reads ERLVEALKCI…NKDLFIVTQR (105 aa). ATP-binding positions include 185–186, K267, G289, and Q298; that span reads LM. Cysteines 346 and 458 form a disulfide. One can recognise a Rhodanese domain in the interval 406-484; the sequence is IPENAVVVDI…GFKNVKVYRP (79 aa). C458 (cysteine persulfide intermediate) is an active-site residue.

It belongs to the ThiI family.

It is found in the cytoplasm. The catalysed reaction is [ThiI sulfur-carrier protein]-S-sulfanyl-L-cysteine + a uridine in tRNA + 2 reduced [2Fe-2S]-[ferredoxin] + ATP + H(+) = [ThiI sulfur-carrier protein]-L-cysteine + a 4-thiouridine in tRNA + 2 oxidized [2Fe-2S]-[ferredoxin] + AMP + diphosphate. The enzyme catalyses [ThiS sulfur-carrier protein]-C-terminal Gly-Gly-AMP + S-sulfanyl-L-cysteinyl-[cysteine desulfurase] + AH2 = [ThiS sulfur-carrier protein]-C-terminal-Gly-aminoethanethioate + L-cysteinyl-[cysteine desulfurase] + A + AMP + 2 H(+). Its pathway is cofactor biosynthesis; thiamine diphosphate biosynthesis. Its function is as follows. Catalyzes the ATP-dependent transfer of a sulfur to tRNA to produce 4-thiouridine in position 8 of tRNAs, which functions as a near-UV photosensor. Also catalyzes the transfer of sulfur to the sulfur carrier protein ThiS, forming ThiS-thiocarboxylate. This is a step in the synthesis of thiazole, in the thiamine biosynthesis pathway. The sulfur is donated as persulfide by IscS. In Colwellia psychrerythraea (strain 34H / ATCC BAA-681) (Vibrio psychroerythus), this protein is tRNA sulfurtransferase.